A 572-amino-acid chain; its full sequence is Linalool synthase TPS2, chloroplastic (572 aa).

The N-terminal 27 residues, 1–27 (EVEEPKTKISASTAEASSSRISSAKMT), are a transit peptide targeting the chloroplast. The interval 1-45 (EVEEPKTKISASTAEASSSRISSAKMTADGTIKLGDQSPLKQSEK) is disordered. The segment covering 8–28 (KISASTAEASSSRISSAKMTA) has biased composition (low complexity). Arg-284, Asp-321, Asp-325, Arg-462, and Asn-465 together coordinate (2E)-geranyl diphosphate. Mg(2+) is bound by residues Asp-321 and Asp-325. Residues 321–325 (DDVYD) carry the DDXXD motif motif. Residues Asn-465, Thr-469, and Ser-473 each contribute to the Mg(2+) site.

This sequence belongs to the terpene synthase family. Tpsb subfamily. In terms of assembly, monomer. Mg(2+) serves as cofactor. Requires Mn(2+) as cofactor. In terms of tissue distribution, expressed in flowers and fruits.

The protein localises to the plastid. The protein resides in the chloroplast. It catalyses the reaction (2E)-geranyl diphosphate = beta-myrcene + diphosphate. The catalysed reaction is (2E)-geranyl diphosphate + H2O = linalool + diphosphate. The enzyme catalyses (2E)-geranyl diphosphate = (Z)-beta-ocimene + diphosphate. It carries out the reaction (2E)-geranyl diphosphate = (E)-beta-ocimene + diphosphate. It participates in secondary metabolite biosynthesis; terpenoid biosynthesis. Functionally, monoterpene synthase (mono-TPS) involved in the biosynthesis of monoterpenes natural products, constituent of coffee beverage aroma. Catalyzes the conversion of (2E)-geranyl diphosphate (GPP) into linalool and beta-myrcene, and, as minor products, cis-ocimene and trans-ocimene. Not able to use geranylgeranyl pyrophosphate (GGPP) and farnesyl pyrophosphate (FPP) as substrates. This Coffea arabica (Arabian coffee) protein is Linalool synthase TPS2, chloroplastic.